The primary structure comprises 491 residues: UDP-N-acetylmuramate--L-alanine ligase (491 aa).

Residue 126-132 (GTHGKTT) coordinates ATP.

It belongs to the MurCDEF family.

Its subcellular location is the cytoplasm. The catalysed reaction is UDP-N-acetyl-alpha-D-muramate + L-alanine + ATP = UDP-N-acetyl-alpha-D-muramoyl-L-alanine + ADP + phosphate + H(+). Its pathway is cell wall biogenesis; peptidoglycan biosynthesis. Its function is as follows. Cell wall formation. In Escherichia coli O7:K1 (strain IAI39 / ExPEC), this protein is UDP-N-acetylmuramate--L-alanine ligase.